The sequence spans 326 residues: tRNA-modifying protein YgfZ (326 aa).

Residues Trp-27 and Trp-189 each contribute to the folate site.

Belongs to the tRNA-modifying YgfZ family.

The protein resides in the cytoplasm. Functionally, folate-binding protein involved in regulating the level of ATP-DnaA and in the modification of some tRNAs. It is probably a key factor in regulatory networks that act via tRNA modification, such as initiation of chromosomal replication. This chain is tRNA-modifying protein YgfZ, found in Enterobacter sp. (strain 638).